We begin with the raw amino-acid sequence, 377 residues long: Flagellin C (377 aa).

2 coiled-coil regions span residues 103–129 (SNSK…IAET) and 301–340 (VDSH…KDTD).

Belongs to the bacterial flagellin family. In terms of assembly, heteromer of multiple flagellin subunits including FlaA, FlaB, FlaC, FlaD and possibly FlaE.

The protein localises to the secreted. The protein resides in the bacterial flagellum. Its function is as follows. Flagellin is the subunit protein which polymerizes to form the filaments of bacterial flagella. FlaC is not essential for flagellar synthesis and motility. This is Flagellin C (flaC) from Vibrio anguillarum (Listonella anguillarum).